Here is a 507-residue protein sequence, read N- to C-terminus: Maturase K (507 aa).

It belongs to the intron maturase 2 family. MatK subfamily.

It is found in the plastid. It localises to the chloroplast. Functionally, usually encoded in the trnK tRNA gene intron. Probably assists in splicing its own and other chloroplast group II introns. In Craterostigma plantagineum (Blue gem), this protein is Maturase K.